The sequence spans 557 residues: Hydroxylamine reductase (557 aa).

Positions 4, 7, 19, and 26 each coordinate [4Fe-4S] cluster. Hybrid [4Fe-2O-2S] cluster-binding residues include His253, Glu277, Cys321, Cys408, Cys436, Cys461, Glu495, and Lys497. The residue at position 408 (Cys408) is a Cysteine persulfide.

Belongs to the HCP family. [4Fe-4S] cluster is required as a cofactor. Requires hybrid [4Fe-2O-2S] cluster as cofactor.

It is found in the cytoplasm. The enzyme catalyses A + NH4(+) + H2O = hydroxylamine + AH2 + H(+). Its function is as follows. Catalyzes the reduction of hydroxylamine to form NH(3) and H(2)O. The polypeptide is Hydroxylamine reductase (Acidithiobacillus ferrooxidans (strain ATCC 53993 / BNL-5-31) (Leptospirillum ferrooxidans (ATCC 53993))).